A 139-amino-acid polypeptide reads, in one-letter code: Gas vesicle protein A (139 aa).

The segment at glutamate 113–arginine 139 is disordered. Residues alanine 129 to arginine 139 show a composition bias toward basic residues.

It belongs to the gas vesicle GvpA family. In terms of assembly, the gas vesicle shell is 2 nm thick and consists of a single layer of this protein. It forms helical ribs nearly perpendicular to the long axis of the vesicle.

The protein resides in the gas vesicle shell. Its function is as follows. Gas vesicles are hollow, gas filled proteinaceous nanostructures found in some microorganisms. During planktonic growth they allow positioning of the organism at a favorable depth for light or nutrient acquisition. GvpA forms the protein shell. The protein is Gas vesicle protein A of Mycobacterium sp. (strain JLS).